Here is a 538-residue protein sequence, read N- to C-terminus: Phosphoenolpyruvate carboxykinase (ATP) (538 aa).

R64 serves as a coordination point for substrate. R152 lines the ATP pocket. Substrate contacts are provided by Y205 and K211. Residues K211, H230, and 246–254 (GLSGTGKTT) contribute to the ATP site. Residues K211 and H230 each coordinate Mn(2+). D267 is a Mn(2+) binding site. ATP contacts are provided by residues E295, R331, R344, 447 to 448 (RI), and T453. Residue R331 coordinates substrate.

The protein belongs to the phosphoenolpyruvate carboxykinase (ATP) family. Monomer. It depends on Mn(2+) as a cofactor.

It is found in the cytoplasm. The catalysed reaction is oxaloacetate + ATP = phosphoenolpyruvate + ADP + CO2. It participates in carbohydrate biosynthesis; gluconeogenesis. In terms of biological role, involved in gluconeogenesis. Catalyzes the conversion of oxaloacetate (OAA) to phosphoenolpyruvate (PEP) through direct phosphoryl transfer between the nucleoside triphosphate and OAA. The sequence is that of Phosphoenolpyruvate carboxykinase (ATP) from Actinobacillus succinogenes (strain ATCC 55618 / DSM 22257 / CCUG 43843 / 130Z).